Reading from the N-terminus, the 165-residue chain is Biosynthetic peptidoglycan transglycosylase (165 aa).

It belongs to the glycosyltransferase 51 family.

Its subcellular location is the cell inner membrane. It catalyses the reaction [GlcNAc-(1-&gt;4)-Mur2Ac(oyl-L-Ala-gamma-D-Glu-L-Lys-D-Ala-D-Ala)](n)-di-trans,octa-cis-undecaprenyl diphosphate + beta-D-GlcNAc-(1-&gt;4)-Mur2Ac(oyl-L-Ala-gamma-D-Glu-L-Lys-D-Ala-D-Ala)-di-trans,octa-cis-undecaprenyl diphosphate = [GlcNAc-(1-&gt;4)-Mur2Ac(oyl-L-Ala-gamma-D-Glu-L-Lys-D-Ala-D-Ala)](n+1)-di-trans,octa-cis-undecaprenyl diphosphate + di-trans,octa-cis-undecaprenyl diphosphate + H(+). It participates in cell wall biogenesis; peptidoglycan biosynthesis. Peptidoglycan polymerase that catalyzes glycan chain elongation from lipid-linked precursors. This is Biosynthetic peptidoglycan transglycosylase from Neisseria meningitidis.